The primary structure comprises 294 residues: Acetyl-coenzyme A carboxylase carboxyl transferase subunit beta (294 aa).

Positions 27–294 (LWHKCPSCDA…PSPVALPVTA (268 aa)) constitute a CoA carboxyltransferase N-terminal domain. Residues Cys-31, Cys-34, Cys-50, and Cys-53 each contribute to the Zn(2+) site. A C4-type zinc finger spans residues 31-53 (CPSCDAVLYRPELEKTLDVCPKC).

Belongs to the AccD/PCCB family. Acetyl-CoA carboxylase is a heterohexamer composed of biotin carboxyl carrier protein (AccB), biotin carboxylase (AccC) and two subunits each of ACCase subunit alpha (AccA) and ACCase subunit beta (AccD). It depends on Zn(2+) as a cofactor.

The protein localises to the cytoplasm. The catalysed reaction is N(6)-carboxybiotinyl-L-lysyl-[protein] + acetyl-CoA = N(6)-biotinyl-L-lysyl-[protein] + malonyl-CoA. Its pathway is lipid metabolism; malonyl-CoA biosynthesis; malonyl-CoA from acetyl-CoA: step 1/1. In terms of biological role, component of the acetyl coenzyme A carboxylase (ACC) complex. Biotin carboxylase (BC) catalyzes the carboxylation of biotin on its carrier protein (BCCP) and then the CO(2) group is transferred by the transcarboxylase to acetyl-CoA to form malonyl-CoA. This chain is Acetyl-coenzyme A carboxylase carboxyl transferase subunit beta, found in Ectopseudomonas mendocina (strain ymp) (Pseudomonas mendocina).